A 459-amino-acid chain; its full sequence is tRNA modification GTPase MnmE (459 aa).

Arginine 22, glutamate 85, and arginine 124 together coordinate (6S)-5-formyl-5,6,7,8-tetrahydrofolate. Positions 221 to 380 constitute a TrmE-type G domain; sequence GLSTVIVGKP…LELQIRDLFF (160 aa). A K(+)-binding site is contributed by asparagine 231. Residues 231-236, 250-256, and 275-278 contribute to the GTP site; these read NVGKSS, TEVAGTT, and DTAG. Serine 235 provides a ligand contact to Mg(2+). Residues threonine 250, valine 252, and threonine 255 each coordinate K(+). Mg(2+) is bound at residue threonine 256. Lysine 459 contributes to the (6S)-5-formyl-5,6,7,8-tetrahydrofolate binding site.

It belongs to the TRAFAC class TrmE-Era-EngA-EngB-Septin-like GTPase superfamily. TrmE GTPase family. Homodimer. Heterotetramer of two MnmE and two MnmG subunits. The cofactor is K(+).

The protein localises to the cytoplasm. In terms of biological role, exhibits a very high intrinsic GTPase hydrolysis rate. Involved in the addition of a carboxymethylaminomethyl (cmnm) group at the wobble position (U34) of certain tRNAs, forming tRNA-cmnm(5)s(2)U34. The protein is tRNA modification GTPase MnmE of Staphylococcus haemolyticus (strain JCSC1435).